Consider the following 207-residue polypeptide: Uridine kinase (207 aa).

13–20 (GASGSGKT) is a binding site for ATP.

This sequence belongs to the uridine kinase family.

Its subcellular location is the cytoplasm. The enzyme catalyses uridine + ATP = UMP + ADP + H(+). It carries out the reaction cytidine + ATP = CMP + ADP + H(+). It participates in pyrimidine metabolism; CTP biosynthesis via salvage pathway; CTP from cytidine: step 1/3. The protein operates within pyrimidine metabolism; UMP biosynthesis via salvage pathway; UMP from uridine: step 1/1. This chain is Uridine kinase, found in Ureaplasma parvum serovar 3 (strain ATCC 27815 / 27 / NCTC 11736).